A 549-amino-acid polypeptide reads, in one-letter code: Lysine-specific demethylase JMJ31 (549 aa).

The JmjC domain maps to 125-296 (DYRPGQIYLA…SNMPEHMDSY (172 aa)). The Fe cation site is built by His-184, Asp-186, and His-266.

Belongs to the JARID1 histone demethylase family. Requires Fe(2+) as cofactor. In terms of tissue distribution, mostly expressed in leaves and inflorescences, and, to a lower extent, in roots, siliques and stems.

The protein resides in the nucleus. Functionally, may function as histone H3 lysine demethylase and be involved in regulation of gene expression. The polypeptide is Lysine-specific demethylase JMJ31 (Arabidopsis thaliana (Mouse-ear cress)).